Here is a 1717-residue protein sequence, read N- to C-terminus: Protein MON2 homolog (1717 aa).

S2 carries the N-acetylserine modification. Residues S205 and S537 each carry the phosphoserine modification. The segment at 511 to 538 (ETECQTTTEEGSSPTQSTEQQDLQSTSD) is disordered. Over residues 522-538 (SSPTQSTEQQDLQSTSD) the composition is skewed to polar residues.

The protein belongs to the MON2 family. In terms of assembly, homooligomer. Heterotrimer with ATP9A and DOP1B; this interaction is retromer-independent. Interacts with SNX3.

Its subcellular location is the early endosome membrane. In terms of biological role, plays a role in regulating membrane trafficking of cargo proteins. Together with ATP9A and DOP1B, regulates SNX3 retromer-mediated endosomal sorting of WLS away from lysosomal degradation. This is Protein MON2 homolog from Homo sapiens (Human).